The chain runs to 623 residues: C2H2-type transcription factor zfpA (623 aa).

Over residues glycine 202 to valine 219 the composition is skewed to polar residues. 2 disordered regions span residues glycine 202–arginine 256 and serine 468–alanine 493. A compositionally biased stretch (low complexity) spans serine 227–serine 239. A C2H2-type zinc finger spans residues glycine 255 to histidine 276.

It is found in the nucleus. Functionally, transcription factor involved in fungal growth and virulence potential. Negatively regulates antifungal drug susceptibility via transcriptional inhibition of the expressions of drug efflux pumps in a crzA-dependent way. Under the treatment of azoles, both zfpA and crzA transfer to nuclei and coregulate the expression of multidrug transporters and then keep normal drug susceptibility in fungal cells. The protein is C2H2-type transcription factor zfpA of Aspergillus fumigatus (strain CBS 144.89 / FGSC A1163 / CEA10) (Neosartorya fumigata).